The sequence spans 486 residues: UDP-N-acetylmuramate--L-alanine ligase (486 aa).

129 to 135 (GTHGKTT) lines the ATP pocket.

Belongs to the MurCDEF family.

The protein resides in the cytoplasm. The enzyme catalyses UDP-N-acetyl-alpha-D-muramate + L-alanine + ATP = UDP-N-acetyl-alpha-D-muramoyl-L-alanine + ADP + phosphate + H(+). Its pathway is cell wall biogenesis; peptidoglycan biosynthesis. Cell wall formation. The protein is UDP-N-acetylmuramate--L-alanine ligase of Vibrio atlanticus (strain LGP32) (Vibrio splendidus (strain Mel32)).